Reading from the N-terminus, the 89-residue chain is Small ribosomal subunit protein bS16 (89 aa).

This sequence belongs to the bacterial ribosomal protein bS16 family.

The sequence is that of Small ribosomal subunit protein bS16 from Gloeobacter violaceus (strain ATCC 29082 / PCC 7421).